Consider the following 203-residue polypeptide: CASP-like protein 2U2 (203 aa).

The disordered stretch occupies residues 1-21; sequence MGGFVDDGAAGLAPSHGSSRA. Residues 1-27 lie on the Cytoplasmic side of the membrane; the sequence is MGGFVDDGAAGLAPSHGSSRAGRGLEG. Residues 28–48 form a helical membrane-spanning segment; it reads AGVFLRFVASLLSIAGLMLLV. The Extracellular segment spans residues 49-73; sequence KDNQTVQQMVATEAVTLETKYSDIS. A glycan (N-linked (GlcNAc...) asparagine) is linked at Asn-51. A helical membrane pass occupies residues 74 to 94; sequence AFVFLLYTNGLVAVYCFFLAL. Over 95-108 the chain is Cytoplasmic; that stretch reads ASVFSLIASARSGK. Residues 109 to 129 traverse the membrane as a helical segment; the sequence is LAGWVTFVLDQGLAYVLLAAA. Topologically, residues 130 to 163 are extracellular; the sequence is AASTEVLYLAENGDLKTSWAEICSQFGHFCHMAR. The helical transmembrane segment at 164-184 threads the bilayer; that stretch reads ASIVVSFLSMLAMAVLSVMSA. The Cytoplasmic segment spans residues 185–203; the sequence is QQLFSKYRRPMTAKTAQDI.

The protein belongs to the Casparian strip membrane proteins (CASP) family. As to quaternary structure, homodimer and heterodimers.

The protein localises to the cell membrane. In Osmunda lancea (Fern), this protein is CASP-like protein 2U2.